Consider the following 968-residue polypeptide: Phosphoenolpyruvate carboxylase (968 aa).

Phosphoserine is present on Ser11. Catalysis depends on residues His172 and Lys602.

It belongs to the PEPCase type 1 family. Homotetramer. Mg(2+) serves as cofactor.

It localises to the cytoplasm. It carries out the reaction oxaloacetate + phosphate = phosphoenolpyruvate + hydrogencarbonate. With respect to regulation, by light-reversible phosphorylation. Its function is as follows. Through the carboxylation of phosphoenolpyruvate (PEP) it forms oxaloacetate, a four-carbon dicarboxylic acid source for the tricarboxylic acid cycle. In Phaseolus vulgaris (Kidney bean), this protein is Phosphoenolpyruvate carboxylase.